A 208-amino-acid chain; its full sequence is Uridine kinase (208 aa).

12-19 (GGSGGGKT) serves as a coordination point for ATP.

The protein belongs to the uridine kinase family.

It localises to the cytoplasm. It catalyses the reaction uridine + ATP = UMP + ADP + H(+). It carries out the reaction cytidine + ATP = CMP + ADP + H(+). It functions in the pathway pyrimidine metabolism; CTP biosynthesis via salvage pathway; CTP from cytidine: step 1/3. Its pathway is pyrimidine metabolism; UMP biosynthesis via salvage pathway; UMP from uridine: step 1/1. In Streptococcus equi subsp. equi (strain 4047), this protein is Uridine kinase.